Here is a 518-residue protein sequence, read N- to C-terminus: Hyccin (518 aa).

2 disordered regions span residues 385-410 and 466-492; these read GLRRLTGRSSKEKDKEKDAATGMDQL and VFSGNQPSSRASSPTSNHVAEQDEGVA. A compositionally biased stretch (basic and acidic residues) spans 393–403; that stretch reads SSKEKDKEKDA. Over residues 466 to 484 the composition is skewed to polar residues; sequence VFSGNQPSSRASSPTSNHV.

It belongs to the Hyccin family. In terms of assembly, component of a phosphatidylinositol 4-kinase (PI4K) complex.

The protein resides in the cytoplasm. Its subcellular location is the cytosol. It is found in the cell membrane. Its function is as follows. Component of a complex required to localize phosphatidylinositol 4-kinase (PI4K) to the plasma membrane. The complex acts as a regulator of phosphatidylinositol 4-phosphate (PtdIns(4)P) synthesis. The polypeptide is Hyccin (hycc1) (Danio rerio (Zebrafish)).